We begin with the raw amino-acid sequence, 545 residues long: Chaperonin GroEL 2 (545 aa).

Residues 29-32, 86-90, Gly-413, 479-481, and Asp-495 contribute to the ATP site; these read TLGP, DGTTT, and NAA.

This sequence belongs to the chaperonin (HSP60) family. As to quaternary structure, forms a cylinder of 14 subunits composed of two heptameric rings stacked back-to-back. Interacts with the co-chaperonin GroES.

The protein resides in the cytoplasm. It carries out the reaction ATP + H2O + a folded polypeptide = ADP + phosphate + an unfolded polypeptide.. Functionally, together with its co-chaperonin GroES, plays an essential role in assisting protein folding. The GroEL-GroES system forms a nano-cage that allows encapsulation of the non-native substrate proteins and provides a physical environment optimized to promote and accelerate protein folding. In Prochlorococcus marinus (strain AS9601), this protein is Chaperonin GroEL 2.